Here is a 457-residue protein sequence, read N- to C-terminus: Argininosuccinate lyase (457 aa).

It belongs to the lyase 1 family. Argininosuccinate lyase subfamily.

The protein localises to the cytoplasm. The enzyme catalyses 2-(N(omega)-L-arginino)succinate = fumarate + L-arginine. It participates in amino-acid biosynthesis; L-arginine biosynthesis; L-arginine from L-ornithine and carbamoyl phosphate: step 3/3. This Exiguobacterium sibiricum (strain DSM 17290 / CCUG 55495 / CIP 109462 / JCM 13490 / 255-15) protein is Argininosuccinate lyase.